Consider the following 465-residue polypeptide: Argininosuccinate lyase (465 aa).

It belongs to the lyase 1 family. Argininosuccinate lyase subfamily.

It localises to the cytoplasm. The enzyme catalyses 2-(N(omega)-L-arginino)succinate = fumarate + L-arginine. It participates in amino-acid biosynthesis; L-arginine biosynthesis; L-arginine from L-ornithine and carbamoyl phosphate: step 3/3. This Methanosphaera stadtmanae (strain ATCC 43021 / DSM 3091 / JCM 11832 / MCB-3) protein is Argininosuccinate lyase.